The following is a 463-amino-acid chain: L-seryl-tRNA(Sec) selenium transferase (463 aa).

Lys295 carries the post-translational modification N6-(pyridoxal phosphate)lysine.

Belongs to the SelA family. In terms of assembly, homodecamer; pentamer of dimers. Binds only one seryl-tRNA(Sec) per dimer. Requires pyridoxal 5'-phosphate as cofactor.

The protein localises to the cytoplasm. The catalysed reaction is L-seryl-tRNA(Sec) + selenophosphate + H(+) = L-selenocysteinyl-tRNA(Sec) + phosphate. It functions in the pathway aminoacyl-tRNA biosynthesis; selenocysteinyl-tRNA(Sec) biosynthesis; selenocysteinyl-tRNA(Sec) from L-seryl-tRNA(Sec) (bacterial route): step 1/1. Converts seryl-tRNA(Sec) to selenocysteinyl-tRNA(Sec) required for selenoprotein biosynthesis. The sequence is that of L-seryl-tRNA(Sec) selenium transferase from Shigella dysenteriae serotype 1 (strain Sd197).